The following is a 127-amino-acid chain: Serum amyloid A protein (127 aa).

The N-terminal stretch at 1-18 (MKLLTSLFLLSLVLCVNS) is a signal peptide. Gln19 bears the Pyrrolidone carboxylic acid mark. Positions 89-127 (GGSSGRGVEDSMADQEANRWGRSGKDPNRYRPKGLDPKY) are disordered. Basic and acidic residues predominate over residues 104–127 (EANRWGRSGKDPNRYRPKGLDPKY).

This sequence belongs to the SAA family. As to expression, expressed by the liver; secreted in plasma.

Its subcellular location is the secreted. In terms of biological role, major acute phase reactant. Apolipoprotein of the HDL complex. The polypeptide is Serum amyloid A protein (SAA1) (Notamacropus eugenii (Tammar wallaby)).